The chain runs to 83 residues: Small ribosomal subunit protein bS16 (83 aa).

This sequence belongs to the bacterial ribosomal protein bS16 family.

This chain is Small ribosomal subunit protein bS16, found in Shewanella denitrificans (strain OS217 / ATCC BAA-1090 / DSM 15013).